A 462-amino-acid polypeptide reads, in one-letter code: Nuclear factor interleukin-3-regulated protein (462 aa).

K24 participates in a covalent cross-link: Glycyl lysine isopeptide (Lys-Gly) (interchain with G-Cter in SUMO2). In terms of domain architecture, bZIP spans 73–136 (DAMYWEKRRK…GLISSTAYAQ (64 aa)). The tract at residues 79 to 95 (KRRKNNEAAKRSREKRR) is basic motif. The tract at residues 99–106 (LVLENKLI) is leucine-zipper. 2 disordered regions span residues 189 to 237 (DVSE…DDRG) and 258 to 302 (SPPL…IHSP). Over residues 201 to 210 (ESSVQGSCRS) the composition is skewed to polar residues. Residue K214 forms a Glycyl lysine isopeptide (Lys-Gly) (interchain with G-Cter in SUMO2) linkage. Residue K219 forms a Glycyl lysine isopeptide (Lys-Gly) (interchain with G-Cter in SUMO1); alternate linkage. Residue K219 forms a Glycyl lysine isopeptide (Lys-Gly) (interchain with G-Cter in SUMO2); alternate linkage. The span at 227 to 237 (SYTREPRDDRG) shows a compositional bias: basic and acidic residues. Residues 264 to 274 (VNRSSSNSPRT) are compositionally biased toward polar residues. Positions 299–363 (IHSPVELKHV…PIDMTSKRHF (65 aa)) are necessary for transcriptional repression and sufficient for interaction with DR1. S301 carries the phosphoserine modification. Residues K306, K314, K326, K332, K337, and K350 each participate in a glycyl lysine isopeptide (Lys-Gly) (interchain with G-Cter in SUMO2) cross-link. At S353 the chain carries Phosphoserine. Glycyl lysine isopeptide (Lys-Gly) (interchain with G-Cter in SUMO2) cross-links involve residues K360, K394, K401, K406, K412, K419, K424, K434, and K448.

The protein belongs to the bZIP family. NFIL3 subfamily. As to quaternary structure, homodimer. Binds DNA as a dimer. Interacts with DR1. Interacts with PER2 and CRY2. Interacts with NR0B2. Interacts with MYSM1. In terms of tissue distribution, expressed in bladder stomach, thyroid, spinal cord, lymph node, trachea, adrenal gland, bone marrow and muscle.

The protein localises to the nucleus. Its function is as follows. Acts as a transcriptional regulator that recognizes and binds to the sequence 5'-[GA]TTA[CT]GTAA[CT]-3', a sequence present in many cellular and viral promoters. Represses transcription from promoters with activating transcription factor (ATF) sites. Represses promoter activity in osteoblasts. Represses transcriptional activity of PER1. Represses transcriptional activity of PER2 via the B-site on the promoter. Activates transcription from the interleukin-3 promoter in T-cells. Competes for the same consensus-binding site with PAR DNA-binding factors (DBP, HLF and TEF). Component of the circadian clock that acts as a negative regulator for the circadian expression of PER2 oscillation in the cell-autonomous core clock. Protects pro-B cells from programmed cell death. Represses the transcription of CYP2A5. Positively regulates the expression and activity of CES2 by antagonizing the repressive action of NR1D1 on CES2. Required for the development of natural killer cell precursors. The protein is Nuclear factor interleukin-3-regulated protein (NFIL3) of Homo sapiens (Human).